The primary structure comprises 264 residues: Flagellar basal-body rod protein FlgG (264 aa).

It belongs to the flagella basal body rod proteins family. As to quaternary structure, the basal body constitutes a major portion of the flagellar organelle and consists of four rings (L,P,S, and M) mounted on a central rod. The rod consists of about 26 subunits of FlgG in the distal portion, and FlgB, FlgC and FlgF are thought to build up the proximal portion of the rod with about 6 subunits each.

It is found in the bacterial flagellum basal body. The protein is Flagellar basal-body rod protein FlgG (flgG) of Bacillus subtilis (strain 168).